A 196-amino-acid chain; its full sequence is MSNNMRKLFSMIADSKDKKEKLIESLQENELLSTDEKKKIIDQIKTMHDFFKQMHTNKGALDKVLRNYMKDYRAVIKSIGVDKFKKVYRLLESETMELLHAIAENPNFLFSKFDRSILGIFLPFFSKPIMFKMSIREMDSQIELYGTKLPLLKLFVMTDEEMNFYANLKTIEQYNDYVRDLLMKFDLEKYMKEKGV.

The protein is CAG pathogenicity island protein 13 (cagS) of Helicobacter pylori (strain ATCC 700392 / 26695) (Campylobacter pylori).